Here is a 1062-residue protein sequence, read N- to C-terminus: Protein P1-P2 (1062 aa).

Positions 1 to 20 (MNRFTAYAALFFIFSLCSTA) are cleaved as a signal peptide. The next 3 helical transmembrane spans lie at 121-141 (AASV…WTLA), 144-164 (ITLF…LGCI), and 172-192 (ALSL…KIIW). Residues 207–399 (VEGYKGFSVP…GITSPNYVFE (193 aa)) enclose the Peptidase S39 domain. Residues His255, Asp286, and Ser354 each act as for protease activity in the active site. Positions 456–557 (TNAPAEKTAQ…AEAQTKQTRK (102 aa)) are disordered. The segment covering 463–484 (TAQTNSAEKTAPSTSAEKTAPT) has biased composition (polar residues). The segment covering 497–511 (QNKRQLRHPRRRYKR) has biased composition (basic residues). The segment covering 541–553 (QGVSESPAEAQTK) has biased composition (polar residues). One can recognise a RdRp catalytic domain in the interval 859–974 (EHTRPTDCSG…APNSDLEEYK (116 aa)).

In terms of processing, specific enzymatic cleavages in vivo yield mature proteins. The protease probably cleaves itself and releases the RdRp (Potential). Cleavages have been shown in the P1 protein, but since the N-terminus containing the serine protease is shared between P1 and P1-P2, cleavages should also occur within the P1-P2 protein.

Its subcellular location is the membrane. The enzyme catalyses RNA(n) + a ribonucleoside 5'-triphosphate = RNA(n+1) + diphosphate. Precursor from which the RNA-dependent RNA polymerase (RdRp) is probably released. RNA-dependent RNA polymerase plays an essential role in virus replication (Potential). This is Protein P1-P2 from Solanum tuberosum (Potato).